The chain runs to 114 residues: T cell receptor beta variable 4-3 (114 aa).

The first 21 residues, Met-1 to Thr-21, serve as a signal peptide directing secretion. In terms of domain architecture, Ig-like spans Gly-22–Gln-114. Cysteines 42 and 110 form a disulfide. 2 N-linked (GlcNAc...) asparagine glycosylation sites follow: Asn-76 and Asn-89.

In terms of assembly, alpha-beta TR is a heterodimer composed of an alpha and beta chain; disulfide-linked. The alpha-beta TR is associated with the transmembrane signaling CD3 coreceptor proteins to form the TR-CD3 (TcR or TCR). The assembly of alpha-beta TR heterodimers with CD3 occurs in the endoplasmic reticulum where a single alpha-beta TR heterodimer associates with one CD3D-CD3E heterodimer, one CD3G-CD3E heterodimer and one CD247 homodimer forming a stable octameric structure. CD3D-CD3E and CD3G-CD3E heterodimers preferentially associate with TR alpha and TR beta chains, respectively. The association of the CD247 homodimer is the last step of TcR assembly in the endoplasmic reticulum and is required for transport to the cell surface.

The protein resides in the cell membrane. Functionally, v region of the variable domain of T cell receptor (TR) beta chain that participates in the antigen recognition. Alpha-beta T cell receptors are antigen specific receptors which are essential to the immune response and are present on the cell surface of T lymphocytes. Recognize peptide-major histocompatibility (MH) (pMH) complexes that are displayed by antigen presenting cells (APC), a prerequisite for efficient T cell adaptive immunity against pathogens. Binding of alpha-beta TR to pMH complex initiates TR-CD3 clustering on the cell surface and intracellular activation of LCK that phosphorylates the ITAM motifs of CD3G, CD3D, CD3E and CD247 enabling the recruitment of ZAP70. In turn ZAP70 phosphorylates LAT, which recruits numerous signaling molecules to form the LAT signalosome. The LAT signalosome propagates signal branching to three major signaling pathways, the calcium, the mitogen-activated protein kinase (MAPK) kinase and the nuclear factor NF-kappa-B (NF-kB) pathways, leading to the mobilization of transcription factors that are critical for gene expression and essential for T cell growth and differentiation. The T cell repertoire is generated in the thymus, by V-(D)-J rearrangement. This repertoire is then shaped by intrathymic selection events to generate a peripheral T cell pool of self-MH restricted, non-autoaggressive T cells. Post-thymic interaction of alpha-beta TR with the pMH complexes shapes TR structural and functional avidity. This chain is T cell receptor beta variable 4-3, found in Homo sapiens (Human).